Reading from the N-terminus, the 255-residue chain is Small ribosomal subunit protein uS2 (255 aa).

The tract at residues Asp233–Lys255 is disordered.

This sequence belongs to the universal ribosomal protein uS2 family.

The chain is Small ribosomal subunit protein uS2 (rpsB) from Lactococcus lactis subsp. lactis (strain IL1403) (Streptococcus lactis).